The primary structure comprises 226 residues: Enolase-phosphatase E1 (226 aa).

Belongs to the HAD-like hydrolase superfamily. MasA/MtnC family. In terms of assembly, monomer. The cofactor is Mg(2+).

It carries out the reaction 5-methylsulfanyl-2,3-dioxopentyl phosphate + H2O = 1,2-dihydroxy-5-(methylsulfanyl)pent-1-en-3-one + phosphate. The protein operates within amino-acid biosynthesis; L-methionine biosynthesis via salvage pathway; L-methionine from S-methyl-5-thio-alpha-D-ribose 1-phosphate: step 3/6. It participates in amino-acid biosynthesis; L-methionine biosynthesis via salvage pathway; L-methionine from S-methyl-5-thio-alpha-D-ribose 1-phosphate: step 4/6. Its function is as follows. Bifunctional enzyme that catalyzes the enolization of 2,3-diketo-5-methylthiopentyl-1-phosphate (DK-MTP-1-P) into the intermediate 2-hydroxy-3-keto-5-methylthiopentenyl-1-phosphate (HK-MTPenyl-1-P), which is then dephosphorylated to form the acireductone 1,2-dihydroxy-3-keto-5-methylthiopentene (DHK-MTPene). The sequence is that of Enolase-phosphatase E1 from Shewanella baltica (strain OS223).